We begin with the raw amino-acid sequence, 315 residues long: Glycine--tRNA ligase alpha subunit (315 aa).

This sequence belongs to the class-II aminoacyl-tRNA synthetase family. Tetramer of two alpha and two beta subunits.

It localises to the cytoplasm. It carries out the reaction tRNA(Gly) + glycine + ATP = glycyl-tRNA(Gly) + AMP + diphosphate. In Pseudomonas putida (strain W619), this protein is Glycine--tRNA ligase alpha subunit.